The chain runs to 509 residues: tRNA-2-methylthio-N(6)-dimethylallyladenosine synthase (509 aa).

Over residues 1–15 (MNEQQRLASRQANSS) the composition is skewed to polar residues. A disordered region spans residues 1-25 (MNEQQRLASRQANSSTKKEEKDYSK). Residues 16 to 25 (TKKEEKDYSK) are compositionally biased toward basic and acidic residues. In terms of domain architecture, MTTase N-terminal spans 66–184 (RKFYIRTYGC…LPYILKDAMF (119 aa)). Cysteine 75, cysteine 111, cysteine 145, cysteine 221, cysteine 225, and cysteine 228 together coordinate [4Fe-4S] cluster. Residues 207 to 437 (RRGDIKAWVN…NTLVNEYGVN (231 aa)) enclose the Radical SAM core domain. The region spanning 440–503 (KRYIGQIVEV…TWSLNGELVK (64 aa)) is the TRAM domain.

It belongs to the methylthiotransferase family. MiaB subfamily. Monomer. Requires [4Fe-4S] cluster as cofactor.

The protein localises to the cytoplasm. It carries out the reaction N(6)-dimethylallyladenosine(37) in tRNA + (sulfur carrier)-SH + AH2 + 2 S-adenosyl-L-methionine = 2-methylsulfanyl-N(6)-dimethylallyladenosine(37) in tRNA + (sulfur carrier)-H + 5'-deoxyadenosine + L-methionine + A + S-adenosyl-L-homocysteine + 2 H(+). Catalyzes the methylthiolation of N6-(dimethylallyl)adenosine (i(6)A), leading to the formation of 2-methylthio-N6-(dimethylallyl)adenosine (ms(2)i(6)A) at position 37 in tRNAs that read codons beginning with uridine. The chain is tRNA-2-methylthio-N(6)-dimethylallyladenosine synthase from Bacillus mycoides (strain KBAB4) (Bacillus weihenstephanensis).